We begin with the raw amino-acid sequence, 265 residues long: Mlc titration factor A (265 aa).

Positions 111, 148, 152, and 211 each coordinate Zn(2+).

This sequence belongs to the MtfA family. In terms of assembly, interacts with Mlc. Zn(2+) is required as a cofactor.

The protein localises to the cytoplasm. In terms of biological role, involved in the modulation of the activity of the glucose-phosphotransferase system (glucose-PTS). Interacts with the transcriptional repressor Mlc, preventing its interaction with DNA and leading to the modulation of expression of genes regulated by Mlc, including ptsG, which encodes the PTS system glucose-specific EIICB component. Functionally, shows zinc-dependent metallopeptidase activity. The polypeptide is Mlc titration factor A (Escherichia fergusonii).